A 391-amino-acid polypeptide reads, in one-letter code: MIGTPYTEGARRAMLLGCGELGKEVAIELQRLGVEVIGVDRYANAPAMQVAHRSHVINMLDAKALRAIIELEKPHLVIPEIEAIATQTLVEMEAEGVNIIPTARATKLTMDREGIRRLAAETLGLPTSPYFFCDTETEFNQAIREIGVPCVVKPVMSSSGKGQSVIRDIAQSNKAWQYAQEGGRAGGGRVIVEGFVPFDYEITLLTVSAVNGIHFCAPIGHRQEDGDYRESWQPQAMSDEVLAKSQAIASKVVEALGGYGLFGVELFVKGNEVYFSEVSPRPHDTGLVTLISQDLSEFALHVRAILGLPIPNIHQHGPSASAVILAEGTSSNIRYQGIGAALEAVNTQLRLFAKPDIDGRRRLGVALARDIDIDSAISKALDSASKVKVIF.

Residues 20–21 and Glu80 contribute to the N(1)-(5-phospho-beta-D-ribosyl)glycinamide site; that span reads EL. ATP contacts are provided by residues Arg112, Lys153, 158–163, 193–196, and Glu201; these read SSGKGQ and EGFV. The ATP-grasp domain maps to 117–306; it reads RLAAETLGLP…EFALHVRAIL (190 aa). Mg(2+) contacts are provided by Glu265 and Glu277. N(1)-(5-phospho-beta-D-ribosyl)glycinamide is bound by residues Asp284, Lys354, and 361–362; that span reads RR.

Belongs to the PurK/PurT family. As to quaternary structure, homodimer.

It catalyses the reaction N(1)-(5-phospho-beta-D-ribosyl)glycinamide + formate + ATP = N(2)-formyl-N(1)-(5-phospho-beta-D-ribosyl)glycinamide + ADP + phosphate + H(+). Its pathway is purine metabolism; IMP biosynthesis via de novo pathway; N(2)-formyl-N(1)-(5-phospho-D-ribosyl)glycinamide from N(1)-(5-phospho-D-ribosyl)glycinamide (formate route): step 1/1. In terms of biological role, involved in the de novo purine biosynthesis. Catalyzes the transfer of formate to 5-phospho-ribosyl-glycinamide (GAR), producing 5-phospho-ribosyl-N-formylglycinamide (FGAR). Formate is provided by PurU via hydrolysis of 10-formyl-tetrahydrofolate. The chain is Formate-dependent phosphoribosylglycinamide formyltransferase from Shewanella sp. (strain W3-18-1).